The primary structure comprises 201 residues: MLKEVRPAILVMLALTLITGLLYPLAMTVVAGTIFPAQAEGSLITRSGQVIGSALIGQEFKDDKYFHGRLSATTAADPNDSTKTVPAPYNAANSSGSNLGPTSKALADRLKEEVDKLKAENPGQPVPVDLVTTSASGLDPDISPEAALFQVPRVAKARGVPEASIRTLVAQQVKGRLLGLLGEPRVNVLALNLALDAAKLQ.

A helical transmembrane segment spans residues 9 to 29 (ILVMLALTLITGLLYPLAMTV). 2 stretches are compositionally biased toward polar residues: residues 73 to 84 (TTAADPNDSTKT) and 91 to 101 (AANSSGSNLGP). The tract at residues 73-103 (TTAADPNDSTKTVPAPYNAANSSGSNLGPTS) is disordered.

The protein belongs to the KdpC family. In terms of assembly, the system is composed of three essential subunits: KdpA, KdpB and KdpC.

Its subcellular location is the cell inner membrane. Part of the high-affinity ATP-driven potassium transport (or Kdp) system, which catalyzes the hydrolysis of ATP coupled with the electrogenic transport of potassium into the cytoplasm. This subunit acts as a catalytic chaperone that increases the ATP-binding affinity of the ATP-hydrolyzing subunit KdpB by the formation of a transient KdpB/KdpC/ATP ternary complex. In Bradyrhizobium sp. (strain BTAi1 / ATCC BAA-1182), this protein is Potassium-transporting ATPase KdpC subunit.